We begin with the raw amino-acid sequence, 76 residues long: U10-ctenitoxin-Pn1a (76 aa).

The N-terminal stretch at 1–15 (SFVFYLFTLITVVRA) is a signal peptide. Residues 16–36 (EEFILENEAEDIAPAVHGESG) constitute a propeptide that is removed on maturation. 4 disulfides stabilise this stretch: C39/C54, C46/C59, C53/C73, and C61/C71.

It belongs to the neurotoxin 02 (plectoxin) family. 09 subfamily. In terms of tissue distribution, expressed by the venom gland.

It localises to the secreted. The chain is U10-ctenitoxin-Pn1a from Phoneutria nigriventer (Brazilian armed spider).